The following is a 207-amino-acid chain: Outer-membrane lipoprotein LolB (207 aa).

Positions 1 to 26 (MSKLKIDTKRRFSLLIALVLIISLSS) are cleaved as a signal peptide. Cys27 is lipidated: N-palmitoyl cysteine. The S-diacylglycerol cysteine moiety is linked to residue Cys27.

It belongs to the LolB family. In terms of assembly, monomer.

The protein localises to the cell outer membrane. Functionally, plays a critical role in the incorporation of lipoproteins in the outer membrane after they are released by the LolA protein. The polypeptide is Outer-membrane lipoprotein LolB (Francisella tularensis subsp. tularensis (strain FSC 198)).